We begin with the raw amino-acid sequence, 447 residues long: Na(+)-translocating NADH-quinone reductase subunit A (447 aa).

This sequence belongs to the NqrA family. As to quaternary structure, composed of six subunits; NqrA, NqrB, NqrC, NqrD, NqrE and NqrF.

The catalysed reaction is a ubiquinone + n Na(+)(in) + NADH + H(+) = a ubiquinol + n Na(+)(out) + NAD(+). Functionally, NQR complex catalyzes the reduction of ubiquinone-1 to ubiquinol by two successive reactions, coupled with the transport of Na(+) ions from the cytoplasm to the periplasm. NqrA to NqrE are probably involved in the second step, the conversion of ubisemiquinone to ubiquinol. This Haemophilus influenzae (strain PittEE) protein is Na(+)-translocating NADH-quinone reductase subunit A.